The sequence spans 394 residues: NAD(P)H-quinone oxidoreductase subunit H (394 aa).

It belongs to the complex I 49 kDa subunit family. As to quaternary structure, NDH-1 can be composed of about 15 different subunits; different subcomplexes with different compositions have been identified which probably have different functions.

The protein resides in the cellular thylakoid membrane. It carries out the reaction a plastoquinone + NADH + (n+1) H(+)(in) = a plastoquinol + NAD(+) + n H(+)(out). It catalyses the reaction a plastoquinone + NADPH + (n+1) H(+)(in) = a plastoquinol + NADP(+) + n H(+)(out). NDH-1 shuttles electrons from an unknown electron donor, via FMN and iron-sulfur (Fe-S) centers, to quinones in the respiratory and/or the photosynthetic chain. The immediate electron acceptor for the enzyme in this species is believed to be plastoquinone. Couples the redox reaction to proton translocation, and thus conserves the redox energy in a proton gradient. Cyanobacterial NDH-1 also plays a role in inorganic carbon-concentration. In Prochlorococcus marinus (strain NATL1A), this protein is NAD(P)H-quinone oxidoreductase subunit H.